Consider the following 520-residue polypeptide: Peptide chain release factor 3 (520 aa).

The region spanning 8–277 is the tr-type G domain; the sequence is ESRKTFAIIS…HAPMPNARQT (270 aa). GTP-binding positions include 17–24, 85–89, and 139–142; these read SHPDAGKT, DTPGH, and NKLD.

Belongs to the TRAFAC class translation factor GTPase superfamily. Classic translation factor GTPase family. PrfC subfamily.

The protein resides in the cytoplasm. Functionally, increases the formation of ribosomal termination complexes and stimulates activities of RF-1 and RF-2. It binds guanine nucleotides and has strong preference for UGA stop codons. It may interact directly with the ribosome. The stimulation of RF-1 and RF-2 is significantly reduced by GTP and GDP, but not by GMP. The protein is Peptide chain release factor 3 of Staphylococcus saprophyticus subsp. saprophyticus (strain ATCC 15305 / DSM 20229 / NCIMB 8711 / NCTC 7292 / S-41).